Reading from the N-terminus, the 568-residue chain is Potassium-transporting ATPase potassium-binding subunit (568 aa).

The next 10 membrane-spanning stretches (helical) occupy residues 1–21 (MWLT…LAVP), 60–80 (GLAL…LLRA), 129–149 (AITF…AGFI), 174–194 (VMLP…VPQA), 251–271 (IHIL…GSML), 278–298 (WVLF…VFTA), 381–401 (VGLI…GMMI), 420–440 (VMLA…LAAV), 488–508 (IGLA…ALAG), and 528–548 (PLFM…TFLP).

This sequence belongs to the KdpA family. As to quaternary structure, the system is composed of three essential subunits: KdpA, KdpB and KdpC.

It localises to the cell inner membrane. Part of the high-affinity ATP-driven potassium transport (or Kdp) system, which catalyzes the hydrolysis of ATP coupled with the electrogenic transport of potassium into the cytoplasm. This subunit binds the periplasmic potassium ions and delivers the ions to the membrane domain of KdpB through an intramembrane tunnel. In Delftia acidovorans (strain DSM 14801 / SPH-1), this protein is Potassium-transporting ATPase potassium-binding subunit.